The following is a 213-amino-acid chain: Phosphatidylserine decarboxylase proenzyme (213 aa).

The active-site Schiff-base intermediate with substrate; via pyruvic acid is the Ser-180. The residue at position 180 (Ser-180) is a Pyruvic acid (Ser); by autocatalysis.

Belongs to the phosphatidylserine decarboxylase family. PSD-A subfamily. In terms of assembly, heterodimer of a large membrane-associated beta subunit and a small pyruvoyl-containing alpha subunit. Pyruvate serves as cofactor. In terms of processing, is synthesized initially as an inactive proenzyme. Formation of the active enzyme involves a self-maturation process in which the active site pyruvoyl group is generated from an internal serine residue via an autocatalytic post-translational modification. Two non-identical subunits are generated from the proenzyme in this reaction, and the pyruvate is formed at the N-terminus of the alpha chain, which is derived from the carboxyl end of the proenzyme. The post-translation cleavage follows an unusual pathway, termed non-hydrolytic serinolysis, in which the side chain hydroxyl group of the serine supplies its oxygen atom to form the C-terminus of the beta chain, while the remainder of the serine residue undergoes an oxidative deamination to produce ammonia and the pyruvoyl prosthetic group on the alpha chain.

The protein localises to the cell membrane. The enzyme catalyses a 1,2-diacyl-sn-glycero-3-phospho-L-serine + H(+) = a 1,2-diacyl-sn-glycero-3-phosphoethanolamine + CO2. The protein operates within phospholipid metabolism; phosphatidylethanolamine biosynthesis; phosphatidylethanolamine from CDP-diacylglycerol: step 2/2. Catalyzes the formation of phosphatidylethanolamine (PtdEtn) from phosphatidylserine (PtdSer). This is Phosphatidylserine decarboxylase proenzyme from Carboxydothermus hydrogenoformans (strain ATCC BAA-161 / DSM 6008 / Z-2901).